The primary structure comprises 89 residues: NADH-ubiquinone oxidoreductase chain 4L (89 aa).

3 helical membrane passes run Met-1–Asn-21, Ile-22–Val-42, and Ile-57–Phe-77.

Belongs to the complex I subunit 4L family.

The protein localises to the mitochondrion membrane. The catalysed reaction is a ubiquinone + NADH + 5 H(+)(in) = a ubiquinol + NAD(+) + 4 H(+)(out). Functionally, core subunit of the mitochondrial membrane respiratory chain NADH dehydrogenase (Complex I) that is believed to belong to the minimal assembly required for catalysis. Complex I functions in the transfer of electrons from NADH to the respiratory chain. The immediate electron acceptor for the enzyme is believed to be ubiquinone. In Neurospora crassa (strain ATCC 24698 / 74-OR23-1A / CBS 708.71 / DSM 1257 / FGSC 987), this protein is NADH-ubiquinone oxidoreductase chain 4L (ndh-4L).